The following is a 484-amino-acid chain: Bifunctional protein GlmU (484 aa).

A pyrophosphorylase region spans residues 1–240; the sequence is MSNPHSSAVI…HRELAGVNDR (240 aa). UDP-N-acetyl-alpha-D-glucosamine-binding positions include 12 to 15, lysine 26, glutamine 83, and 88 to 89; these read LAAG and GT. Mg(2+) is bound at residue aspartate 113. 4 residues coordinate UDP-N-acetyl-alpha-D-glucosamine: glycine 150, glutamate 165, asparagine 180, and asparagine 238. Asparagine 238 contacts Mg(2+). A linker region spans residues 241–261; it reads VQLAQAGKILNQRLVEDAMRN. Residues 262-484 are N-acetyltransferase; sequence GATIVDPDTT…QAHAHETKEG (223 aa). Positions 343 and 361 each coordinate UDP-N-acetyl-alpha-D-glucosamine. The active-site Proton acceptor is the histidine 373. UDP-N-acetyl-alpha-D-glucosamine is bound by residues tyrosine 376 and asparagine 387. Acetyl-CoA is bound by residues alanine 390, 396–397, serine 415, and alanine 433; that span reads NY. A disordered region spans residues 461–484; it reads EKNRPGTPAADAARQAHAHETKEG.

In the N-terminal section; belongs to the N-acetylglucosamine-1-phosphate uridyltransferase family. It in the C-terminal section; belongs to the transferase hexapeptide repeat family. In terms of assembly, homotrimer. Mg(2+) serves as cofactor.

The protein localises to the cytoplasm. The enzyme catalyses alpha-D-glucosamine 1-phosphate + acetyl-CoA = N-acetyl-alpha-D-glucosamine 1-phosphate + CoA + H(+). It carries out the reaction N-acetyl-alpha-D-glucosamine 1-phosphate + UTP + H(+) = UDP-N-acetyl-alpha-D-glucosamine + diphosphate. It participates in nucleotide-sugar biosynthesis; UDP-N-acetyl-alpha-D-glucosamine biosynthesis; N-acetyl-alpha-D-glucosamine 1-phosphate from alpha-D-glucosamine 6-phosphate (route II): step 2/2. Its pathway is nucleotide-sugar biosynthesis; UDP-N-acetyl-alpha-D-glucosamine biosynthesis; UDP-N-acetyl-alpha-D-glucosamine from N-acetyl-alpha-D-glucosamine 1-phosphate: step 1/1. The protein operates within bacterial outer membrane biogenesis; LPS lipid A biosynthesis. In terms of biological role, catalyzes the last two sequential reactions in the de novo biosynthetic pathway for UDP-N-acetylglucosamine (UDP-GlcNAc). The C-terminal domain catalyzes the transfer of acetyl group from acetyl coenzyme A to glucosamine-1-phosphate (GlcN-1-P) to produce N-acetylglucosamine-1-phosphate (GlcNAc-1-P), which is converted into UDP-GlcNAc by the transfer of uridine 5-monophosphate (from uridine 5-triphosphate), a reaction catalyzed by the N-terminal domain. The polypeptide is Bifunctional protein GlmU (Corynebacterium diphtheriae (strain ATCC 700971 / NCTC 13129 / Biotype gravis)).